The primary structure comprises 311 residues: Heparan sulfate glucosamine 3-O-sulfotransferase 1 (311 aa).

The signal sequence occupies residues 1–20; that stretch reads MTLLLLGAVLLVAQPQLVHS. An N-linked (GlcNAc...) asparagine glycan is attached at Asn-52. 3'-phosphoadenylyl sulfate contacts are provided by residues 68-72, Arg-151, and Ser-159; that span reads KGGTR. 3 N-linked (GlcNAc...) asparagine glycosylation sites follow: Asn-196, Asn-246, and Asn-253. Tyr-259 contributes to the 3'-phosphoadenylyl sulfate binding site. An intrachain disulfide couples Cys-260 to Cys-269. A 3'-phosphoadenylyl sulfate-binding site is contributed by 274–278; the sequence is KGRAH.

This sequence belongs to the sulfotransferase 1 family.

The protein resides in the golgi apparatus lumen. The enzyme catalyses alpha-D-glucosaminyl-[heparan sulfate](n) + 3'-phosphoadenylyl sulfate = 3-sulfo-alpha-D-glucosaminyl-[heparan sulfate](n) + adenosine 3',5'-bisphosphate + H(+). Sulfotransferase that utilizes 3'-phospho-5'-adenylyl sulfate (PAPS) to catalyze the transfer of a sulfo group to position 3 of glucosamine residues in heparan. Catalyzes the rate limiting step in the biosynthesis of heparan sulfate (HSact). This modification is a crucial step in the biosynthesis of anticoagulant heparan sulfate as it completes the structure of the antithrombin pentasaccharide binding site. This chain is Heparan sulfate glucosamine 3-O-sulfotransferase 1 (Hs3st1), found in Mus musculus (Mouse).